The sequence spans 3259 residues: Golgin subfamily B member 1 (3259 aa).

N-acetylmethionine is present on M1. Over M1 to R3235 the chain is Cytoplasmic. Residues S6, S17, S138, and S528 each carry the phosphoserine modification. Residues E48 to L593 are a coiled coil. The tract at residues G119 to E142 is disordered. The segment covering Q131–E142 has biased composition (basic and acidic residues). Residues L624 to I652 form a disordered region. The span at V635–E650 shows a compositional bias: basic and acidic residues. S653 carries the post-translational modification Phosphoserine. Coiled coils occupy residues D677–P1028, L1062–D1245, and G1301–H1779. The segment at A944–Y963 is disordered. A compositionally biased stretch (basic and acidic residues) spans S1747–I1763. The disordered stretch occupies residues S1747 to F1829. Composition is skewed to polar residues over residues Q1782–P1794 and S1802–S1820. A coiled-coil region spans residues D1828 to E3185. Residues S2216, S2735, S2872, and S2884 each carry the phosphoserine modification. The segment at R2856–V2876 is disordered. Residues S2865–E2875 are compositionally biased toward polar residues. The segment at T2998 to Q3021 is disordered. The residue at position 3037 (S3037) is a Phosphoserine. The segment at I3107–Q3140 is disordered. Positions N3118 to E3131 are enriched in basic and acidic residues. A helical transmembrane segment spans residues V3236 to T3256. Residues G3257 to L3259 lie on the Lumenal side of the membrane.

As to quaternary structure, homodimer; disulfide-linked. Interacts with PLK3.

The protein localises to the golgi apparatus membrane. Functionally, may participate in forming intercisternal cross-bridges of the Golgi complex. The polypeptide is Golgin subfamily B member 1 (GOLGB1) (Homo sapiens (Human)).